Consider the following 190-residue polypeptide: Small ribosomal subunit protein uS4c (190 aa).

One can recognise an S4 RNA-binding domain in the interval 92–152 (RLDHVVYRAG…KSPSSAQLPP (61 aa)).

Belongs to the universal ribosomal protein uS4 family. Part of the 30S ribosomal subunit. Contacts protein S5. The interaction surface between S4 and S5 is involved in control of translational fidelity.

It is found in the plastid. The protein resides in the chloroplast. Its function is as follows. One of the primary rRNA binding proteins, it binds directly to 16S rRNA where it nucleates assembly of the body of the 30S subunit. With S5 and S12 plays an important role in translational accuracy. The chain is Small ribosomal subunit protein uS4c (rps4) from Cyanidioschyzon merolae (strain NIES-3377 / 10D) (Unicellular red alga).